A 448-amino-acid polypeptide reads, in one-letter code: Trigger factor (448 aa).

Positions 173–258 (SDRVTIDFVG…LKQIEWAHMP (86 aa)) constitute a PPIase FKBP-type domain.

It belongs to the FKBP-type PPIase family. Tig subfamily.

It is found in the cytoplasm. It catalyses the reaction [protein]-peptidylproline (omega=180) = [protein]-peptidylproline (omega=0). Involved in protein export. Acts as a chaperone by maintaining the newly synthesized protein in an open conformation. Functions as a peptidyl-prolyl cis-trans isomerase. The sequence is that of Trigger factor from Herminiimonas arsenicoxydans.